The primary structure comprises 1270 residues: Vigilin (1270 aa).

Over residues 1–11 (MSSVAVLTQES) the composition is skewed to polar residues. Disordered regions lie at residues 1 to 23 (MSSV…TQQQ) and 28 to 47 (ALNS…FPPL). KH domains lie at 150-188 (ASAT…IPRP), 219-260 (DKRA…IPPP), 291-333 (KKKT…IPPT), 360-402 (ANSF…EFTE), 431-473 (INRT…IPPD), 504-545 (ENER…NFPD), 577-619 (VENS…LPGR), 651-693 (ANIT…FPTE), 724-766 (QTKS…FPTS), 798-840 (DNVV…LPTV), and 872-913 (EAQV…FPDR). Residues 911–947 (PDREENPAPVAEPALQENGEEGGEGKDGKDADPSSPR) are disordered. Positions 933–947 (GEGKDGKDADPSSPR) are enriched in basic and acidic residues. 3 consecutive KH domains span residues 970-1012 (ALVP…VPAP), 1051-1093 (ALRS…FPDK), and 1126-1168 (LEQM…FPQS). The interval 1217-1270 (SHEESKVPSKGFVVRDAPCGTVNNEKAPDMSSSEDFPSFGAQVAPKTLPWGPKR) is disordered.

Its subcellular location is the cytoplasm. This Gallus gallus (Chicken) protein is Vigilin (HDLBP).